The following is an 85-amino-acid chain: Putative defensin-like protein 258 (85 aa).

An N-terminal signal peptide occupies residues 1 to 25; sequence MINVSLKRSLLIFISVITSNIGSEA. 3 disulfides stabilise this stretch: C57–C75, C63–C82, and C67–C84.

It belongs to the DEFL family.

It localises to the secreted. The protein is Putative defensin-like protein 258 of Arabidopsis thaliana (Mouse-ear cress).